The primary structure comprises 725 residues: Polyribonucleotide nucleotidyltransferase (725 aa).

Residues D487 and D493 each coordinate Mg(2+). The KH domain occupies 554 to 613 (PRIETMQIPTDKIREVIGTGGKVIREIVEKTGAKIDIQDTGVVKIASSDGKAIKAAYNWI). Positions 623–691 (GMIYDGTVVK…ERGKIRLSMK (69 aa)) constitute an S1 motif domain. The tract at residues 699–725 (EDLTEKLKAEREADRNRERQARQSAGE) is disordered. Positions 701–719 (LTEKLKAEREADRNRERQA) are enriched in basic and acidic residues.

It belongs to the polyribonucleotide nucleotidyltransferase family. It depends on Mg(2+) as a cofactor.

Its subcellular location is the cytoplasm. The enzyme catalyses RNA(n+1) + phosphate = RNA(n) + a ribonucleoside 5'-diphosphate. Its function is as follows. Involved in mRNA degradation. Catalyzes the phosphorolysis of single-stranded polyribonucleotides processively in the 3'- to 5'-direction. The polypeptide is Polyribonucleotide nucleotidyltransferase (Methylobacterium sp. (strain 4-46)).